The sequence spans 322 residues: Cytochrome f (322 aa).

A signal peptide spans 1-36 (MQKNRNTFSWVKEQMTRCISVSMMIYVITRASISNA). Residues Tyr37, Cys57, Cys60, and His61 each coordinate heme. The chain crosses the membrane as a helical span at residues 288 to 308 (IQGLLFFLASVILAQIFLVLK).

It belongs to the cytochrome f family. The 4 large subunits of the cytochrome b6-f complex are cytochrome b6, subunit IV (17 kDa polypeptide, petD), cytochrome f and the Rieske protein, while the 4 small subunits are PetG, PetL, PetM and PetN. The complex functions as a dimer. The cofactor is heme.

It localises to the plastid. The protein localises to the chloroplast thylakoid membrane. Component of the cytochrome b6-f complex, which mediates electron transfer between photosystem II (PSII) and photosystem I (PSI), cyclic electron flow around PSI, and state transitions. The chain is Cytochrome f from Nymphaea alba (White water-lily).